A 126-amino-acid polypeptide reads, in one-letter code: 13 kDa ribonucleoprotein-associated protein (126 aa).

It belongs to the eukaryotic ribosomal protein eL8 family. Component of the U3 snoRNP particle. Binds to the C'/D and B/C motifs in U3 snoRNA. Component of the 25S U4/U6.U5 tri-snRNP particle, a subcomplex of the spliceosome. Binds to the 5' stem-loop of U4 snRNA.

It localises to the nucleus. The protein resides in the nucleolus. Common component of the spliceosome and rRNA processing machinery. In association with the spliceosomal U4/U6.U5 tri-snRNP particle, required for splicing of pre-mRNA. In association with box C/D snoRNPs, required for processing of pre-ribosomal RNA (rRNA) and site-specific 2'-O-methylation of substrate RNAs. Essential for the accumulation and stability of U4 snRNA, U6 snRNA, and box C/D snoRNAs. The protein is 13 kDa ribonucleoprotein-associated protein (SNU13) of Candida glabrata (strain ATCC 2001 / BCRC 20586 / JCM 3761 / NBRC 0622 / NRRL Y-65 / CBS 138) (Yeast).